Here is a 757-residue protein sequence, read N- to C-terminus: Alcohol dehydrogenase (quinone), dehydrogenase subunit (757 aa).

Residues Met-1 to Ala-34 form the signal peptide. Gln-35 carries the pyrrolidone carboxylic acid modification. Position 95 (Glu-95) interacts with pyrroloquinoline quinone. Cys-141 and Cys-142 are oxidised to a cystine. Position 147 (Arg-147) interacts with pyrroloquinoline quinone. Glu-215 lines the Ca(2+) pocket. Residue Thr-277 coordinates pyrroloquinoline quinone. Asn-297 and Asp-342 together coordinate Ca(2+). Asp-342 (proton acceptor) is an active-site residue. Positions 369 and 588 each coordinate pyrroloquinoline quinone. Positions Ala-640–Ala-719 constitute a Cytochrome c domain. Cys-653, Cys-656, His-657, and Met-696 together coordinate heme c. The disordered stretch occupies residues Glu-726–Pro-757. The span at Asn-732 to Asp-750 shows a compositional bias: polar residues.

The protein belongs to the bacterial PQQ dehydrogenase family. As to quaternary structure, the alcohol dehydrogenase multicomponent enzyme system is composed of a dehydrogenase subunit I (AdhA), a cytochrome c subunit II (AdhB) and a subunit III (AdhS). Requires pyrroloquinoline quinone as cofactor. Ca(2+) is required as a cofactor. Heme c serves as cofactor.

It localises to the cell membrane. It catalyses the reaction ethanol + a ubiquinone = a ubiquinol + acetaldehyde. 2,6-dichloro-4-dicyanovinylphenol (PC16) and antimycin A inhibit ubiquinol oxidation activity more selectively than the ubiquinone reductase activity. Functionally, dehydrogenase component of the alcohol dehydrogenase multicomponent enzyme system which is involved in the production of acetic acid and in the ethanol oxidase respiratory chain. Quinohemoprotein alcohol dehydrogenase (ADH) catalyzes the oxidation of ethanol to acetaldehyde by transferring electrons to the ubiquinone embedded in the membrane phospholipids. The electrons transfer from ethanol to membranous ubiquinone occurs from pyrroloquinoline quinone (PQQ) to one heme c in subunit I (AdhA), and finally to two heme c in subunit II (AdhB). Besides ubiquinone reduction, ADH also has a ubiquinol (QH2) oxidation reaction which mediates electron transfer from ubiquinol to the non-energy generating bypass oxidase system. The electrons transfer occurs from ubiquinol (QH2) to the additional heme c within subunit II (AdhB). Also able to use quinone analogs such as 2,3-dimethoxy-5-methyl-6-n-decyl-1,4-benzoquinone (DB) and 2,3-dimethoxy-5-methyl-6-n-pentyl-1,4-benzoquinone (PB). The protein is Alcohol dehydrogenase (quinone), dehydrogenase subunit of Gluconobacter oxydans (strain 621H) (Gluconobacter suboxydans).